The sequence spans 89 residues: Small ribosomal subunit protein uS15 (89 aa).

A disordered region spans residues 1–24 (MSLNAETKAGIVEKYRRDPSDTGS). Positions 11–20 (IVEKYRRDPS) are enriched in basic and acidic residues.

This sequence belongs to the universal ribosomal protein uS15 family. In terms of assembly, part of the 30S ribosomal subunit. Forms a bridge to the 50S subunit in the 70S ribosome, contacting the 23S rRNA.

Its function is as follows. One of the primary rRNA binding proteins, it binds directly to 16S rRNA where it helps nucleate assembly of the platform of the 30S subunit by binding and bridging several RNA helices of the 16S rRNA. Functionally, forms an intersubunit bridge (bridge B4) with the 23S rRNA of the 50S subunit in the ribosome. This chain is Small ribosomal subunit protein uS15, found in Thioalkalivibrio sulfidiphilus (strain HL-EbGR7).